A 485-amino-acid chain; its full sequence is ATP synthase subunit beta (485 aa).

Residues 1–11 are compositionally biased toward basic and acidic residues; the sequence is MPATETADKNT. Residues 1 to 20 form a disordered region; the sequence is MPATETADKNTKSANSDTSG. 170–177 contacts ATP; that stretch reads GGAGVGKT.

It belongs to the ATPase alpha/beta chains family. In terms of assembly, F-type ATPases have 2 components, CF(1) - the catalytic core - and CF(0) - the membrane proton channel. CF(1) has five subunits: alpha(3), beta(3), gamma(1), delta(1), epsilon(1). CF(0) has three main subunits: a(1), b(2) and c(9-12). The alpha and beta chains form an alternating ring which encloses part of the gamma chain. CF(1) is attached to CF(0) by a central stalk formed by the gamma and epsilon chains, while a peripheral stalk is formed by the delta and b chains.

It localises to the cell membrane. The enzyme catalyses ATP + H2O + 4 H(+)(in) = ADP + phosphate + 5 H(+)(out). Functionally, produces ATP from ADP in the presence of a proton gradient across the membrane. The catalytic sites are hosted primarily by the beta subunits. This is ATP synthase subunit beta from Mycolicibacterium paratuberculosis (strain ATCC BAA-968 / K-10) (Mycobacterium paratuberculosis).